Here is a 124-residue protein sequence, read N- to C-terminus: Glycine cleavage system H protein (124 aa).

Positions 22-104 constitute a Lipoyl-binding domain; it reads KAKVGITDFA…YENGYLFIIE (83 aa). Lys-63 bears the N6-lipoyllysine mark.

This sequence belongs to the GcvH family. As to quaternary structure, the glycine cleavage system is composed of four proteins: P, T, L and H. (R)-lipoate is required as a cofactor.

Functionally, the glycine cleavage system catalyzes the degradation of glycine. The H protein shuttles the methylamine group of glycine from the P protein to the T protein. This Endomicrobium trichonymphae protein is Glycine cleavage system H protein.